The sequence spans 592 residues: Arginine--tRNA ligase (592 aa).

Residues 134–144 carry the 'HIGH' region motif; the sequence is ANPTGPLHVGH.

It belongs to the class-I aminoacyl-tRNA synthetase family. As to quaternary structure, monomer.

It localises to the cytoplasm. It carries out the reaction tRNA(Arg) + L-arginine + ATP = L-arginyl-tRNA(Arg) + AMP + diphosphate. The sequence is that of Arginine--tRNA ligase from Coxiella burnetii (strain CbuG_Q212) (Coxiella burnetii (strain Q212)).